The sequence spans 259 residues: Keratinocyte-associated transmembrane protein 2 (259 aa).

An N-terminal signal peptide occupies residues Met-1–Cys-44. Over Ser-45–Asp-190 the chain is Extracellular. A disordered region spans residues Arg-47–Glu-155. Over residues Asn-50–Leu-81 the composition is skewed to polar residues. Residues Asn-54 and Asn-68 are each glycosylated (N-linked (GlcNAc...) asparagine). Over residues Ser-82–Ala-104 the composition is skewed to low complexity. Acidic residues predominate over residues Pro-105–Leu-122. At Ser-165 the chain carries Phosphoserine. The helical transmembrane segment at Ser-191–Tyr-211 threads the bilayer. Residues His-212–Phe-259 are Cytoplasmic-facing. Residues Ser-223 and Ser-250 each carry the phosphoserine modification.

Its subcellular location is the membrane. The protein is Keratinocyte-associated transmembrane protein 2 (Kct2) of Mus musculus (Mouse).